Here is a 215-residue protein sequence, read N- to C-terminus: MNLTIYLITDDKYFKDRDLFNTIEQALQGGVTAVQYRFENKTTRQMYEELVKLRELTRKYNADLVVNDRVDLALAVEADGVHIGKDDLPPEVVRKIVGDKMYIGYTANSLEEVKRAQELPVDYIGFGSIYHTSTKENYKLVGVEALKEAVKISQKPIVCIGGIMPYRVPEVVRAGCRNIAVSSGILGFADVKKAAESIKRAYQETLRMLMLMGKV.

4-amino-2-methyl-5-(diphosphooxymethyl)pyrimidine contacts are provided by residues 35–39 and Asn67; that span reads QYRFE. The Mg(2+) site is built by Asp68 and Asp87. Thr106 is a 4-amino-2-methyl-5-(diphosphooxymethyl)pyrimidine binding site. 132 to 134 serves as a coordination point for 2-[(2R,5Z)-2-carboxy-4-methylthiazol-5(2H)-ylidene]ethyl phosphate; sequence TST. 4-amino-2-methyl-5-(diphosphooxymethyl)pyrimidine is bound at residue Lys135. Gly162 serves as a coordination point for 2-[(2R,5Z)-2-carboxy-4-methylthiazol-5(2H)-ylidene]ethyl phosphate.

It belongs to the thiamine-phosphate synthase family. Mg(2+) is required as a cofactor.

The enzyme catalyses 2-[(2R,5Z)-2-carboxy-4-methylthiazol-5(2H)-ylidene]ethyl phosphate + 4-amino-2-methyl-5-(diphosphooxymethyl)pyrimidine + 2 H(+) = thiamine phosphate + CO2 + diphosphate. It catalyses the reaction 2-(2-carboxy-4-methylthiazol-5-yl)ethyl phosphate + 4-amino-2-methyl-5-(diphosphooxymethyl)pyrimidine + 2 H(+) = thiamine phosphate + CO2 + diphosphate. The catalysed reaction is 4-methyl-5-(2-phosphooxyethyl)-thiazole + 4-amino-2-methyl-5-(diphosphooxymethyl)pyrimidine + H(+) = thiamine phosphate + diphosphate. Its pathway is cofactor biosynthesis; thiamine diphosphate biosynthesis; thiamine phosphate from 4-amino-2-methyl-5-diphosphomethylpyrimidine and 4-methyl-5-(2-phosphoethyl)-thiazole: step 1/1. Condenses 4-methyl-5-(beta-hydroxyethyl)thiazole monophosphate (THZ-P) and 2-methyl-4-amino-5-hydroxymethyl pyrimidine pyrophosphate (HMP-PP) to form thiamine monophosphate (TMP). This is Thiamine-phosphate synthase 1 from Aquifex aeolicus (strain VF5).